Consider the following 977-residue polypeptide: Collagen alpha-2(I) chain (977 aa).

The segment at 1–977 (SGGFDFSFLP…RGSQGSQGPS (977 aa)) is disordered. 4-hydroxyproline is present on residues Pro-10, Pro-13, Pro-28, and Pro-34. The segment covering 17-66 (GPMGLMGPRGPPGASGAPGPQGFQGPAGEPGEPGQTGPAGARGPAGPPGK) has biased composition (low complexity). 5-hydroxylysine; alternate is present on Lys-91. O-linked (Gal...) hydroxylysine; alternate glycosylation is present at Lys-91. Composition is skewed to low complexity over residues 138–159 (SRGS…SAGP) and 205–226 (PGAN…AGAP). Positions 258 to 267 (GESGGKGEPG) are enriched in gly residues. Residues 268–278 (SAGPQGPPGSS) are compositionally biased toward low complexity. Positions 300 to 309 (GLRGGPGSRG) are enriched in gly residues. A compositionally biased stretch (low complexity) spans 322–338 (PAGARGASGPAGVRGPS). Residues Pro-344 and Pro-347 each carry the 4-hydroxyproline modification. Residues 373 to 392 (LPGIDGRPGPIGPAGARGEA) show a composition bias toward low complexity. The span at 441-450 (GVQGGKGEQG) shows a compositional bias: gly residues. Low complexity-rich tracts occupy residues 497–514 (SGES…SRGP) and 526–536 (EPGVVGAPGTA). Gly residues predominate over residues 537–546 (GPAGSGGLPG). Low complexity-rich tracts occupy residues 569–605 (VGTT…AGPA) and 620–640 (VGPA…QPGA). The span at 641–650 (KGERGTKGPK) shows a compositional bias: basic and acidic residues. The span at 658–668 (PTGPVGSAGPA) shows a compositional bias: low complexity. Positions 678 to 687 (GSRGDGGPPG) are enriched in gly residues. Over residues 689-698 (TGFPGAAGRT) the composition is skewed to low complexity. Over residues 735-744 (GETGAGGPPG) the composition is skewed to gly residues. Composition is skewed to low complexity over residues 752-779 (SGEP…LGLP) and 787-797 (LPGVAGAVGEP). A compositionally biased stretch (gly residues) spans 798–817 (GPLGIGPPGARGPSGAGVNG). 2 stretches are compositionally biased toward low complexity: residues 853 to 871 (PVGA…PAGK) and 878 to 898 (PGPA…PSGP). Over residues 902-913 (RGDKGEAGDKGP) the composition is skewed to basic and acidic residues.

The protein belongs to the fibrillar collagen family. As to quaternary structure, trimers of one alpha 2(I) and two alpha 1(I) chains. Interacts (via C-terminus) with TMEM131 (via PapD-L domain); the interaction is direct and is involved in assembly and TRAPPIII ER-to-Golgi transport complex-dependent secretion of collagen. Post-translationally, prolines at the third position of the tripeptide repeating unit (G-X-Y) are hydroxylated in some or all of the chains. Expressed in bones.

The protein localises to the secreted. The protein resides in the extracellular space. It is found in the extracellular matrix. Functionally, type I collagen is a member of group I collagen (fibrillar forming collagen). This chain is Collagen alpha-2(I) chain, found in Scelidodon sp. (strain SLP-2019) (South American ground sloth).